We begin with the raw amino-acid sequence, 163 residues long: Urease accessory protein UreE (163 aa).

Belongs to the UreE family.

It is found in the cytoplasm. Its function is as follows. Involved in urease metallocenter assembly. Binds nickel. Probably functions as a nickel donor during metallocenter assembly. This is Urease accessory protein UreE from Actinomyces naeslundii.